Reading from the N-terminus, the 410-residue chain is Ribosomal protein S6 kinase-related protein (410 aa).

The Protein kinase domain occupies 107-274 (LKILGLVAKG…GTLQYMAPEV (168 aa)). ATP contacts are provided by residues 113–121 (VAKGSFGTV) and Lys136. Residue Asp229 is the Proton acceptor of the active site.

Belongs to the protein kinase superfamily. Ser/Thr protein kinase family.

The catalysed reaction is L-seryl-[protein] + ATP = O-phospho-L-seryl-[protein] + ADP + H(+). It carries out the reaction L-threonyl-[protein] + ATP = O-phospho-L-threonyl-[protein] + ADP + H(+). The protein is Ribosomal protein S6 kinase-related protein of Homo sapiens (Human).